The following is a 321-amino-acid chain: Cysteine and histidine-rich domain-containing protein 1 (321 aa).

Residues Cys-9, Cys-14, Cys-28, His-31, Cys-46, Cys-47, Cys-63, His-68, Cys-152, Cys-157, Cys-170, His-173, Cys-188, Cys-189, Cys-205, and His-210 each coordinate Zn(2+). 2 CHORD domains span residues 9–68 (CYHK…RGKH) and 152–210 (CRNN…SGEH). One can recognise a CS domain in the interval 218–308 (VSKFREDWFS…KHGTGWPRLK (91 aa)).

Its function is as follows. Regulates centrosome duplication. Controls the secretion of the tyrosine kinase receptor let-23/EGFR from the endoplasmic reticulum and is required for the localization of let-23/EGFR to the plasma membrane of vulval precursor cells. It thus plays a role in positively regulating let/EGFR signaling, and anchor cell and vulval precursor cell alignment. Plays a role in vulval development and morphogenesis. The chain is Cysteine and histidine-rich domain-containing protein 1 from Caenorhabditis elegans.